The sequence spans 130 residues: Ribonuclease VapC4 (130 aa).

The PINc domain occupies 7 to 130 (LADTSVFIGI…AMPDVEVITI (124 aa)). Asp-9 and Asp-98 together coordinate Mg(2+).

This sequence belongs to the PINc/VapC protein family. As to quaternary structure, interacts with cognate antitoxin VapB4. Mg(2+) serves as cofactor.

Its subcellular location is the secreted. Functionally, toxic component of a type II toxin-antitoxin (TA) system. Probably exerts its toxic effect by binding to mRNA, inhibiting translation. Binds to, recognizes and cleaves ssRNA at ACGC and AC(A/U)GC sequences, usually between the G and C; cleavage is not very efficient, nor is cleavage required to inhibit protein synthesis. Upon expression in situ, in M.smegmatis or E.coli inhibits cell growth and colony formation; in at least E.coli also causes increased levels of cellular RNA. Its toxic effect is neutralized by coexpression with cognate antitoxin VapB4. In Mycobacterium tuberculosis (strain ATCC 25618 / H37Rv), this protein is Ribonuclease VapC4.